Consider the following 280-residue polypeptide: UPF0273 protein SSO1861 (280 aa).

The KaiC domain occupies 2–246 (KRVKTYIPGL…YLKISNWSVS (245 aa)). An ATP-binding site is contributed by 29–36 (GGPGTGKS).

This sequence belongs to the UPF0273 family.

This chain is UPF0273 protein SSO1861, found in Saccharolobus solfataricus (strain ATCC 35092 / DSM 1617 / JCM 11322 / P2) (Sulfolobus solfataricus).